The sequence spans 339 residues: Glycerol-3-phosphate dehydrogenase [NAD(P)+] (339 aa).

Residues S14, Y15, H35, and K109 each coordinate NADPH. The sn-glycerol 3-phosphate site is built by K109, G138, and T140. A142 contributes to the NADPH binding site. K194, D247, S257, R258, and N259 together coordinate sn-glycerol 3-phosphate. K194 acts as the Proton acceptor in catalysis. R258 provides a ligand contact to NADPH. NADPH is bound by residues V282 and E284.

The protein belongs to the NAD-dependent glycerol-3-phosphate dehydrogenase family.

The protein resides in the cytoplasm. The catalysed reaction is sn-glycerol 3-phosphate + NAD(+) = dihydroxyacetone phosphate + NADH + H(+). It carries out the reaction sn-glycerol 3-phosphate + NADP(+) = dihydroxyacetone phosphate + NADPH + H(+). It functions in the pathway membrane lipid metabolism; glycerophospholipid metabolism. Its function is as follows. Catalyzes the reduction of the glycolytic intermediate dihydroxyacetone phosphate (DHAP) to sn-glycerol 3-phosphate (G3P), the key precursor for phospholipid synthesis. This Shewanella amazonensis (strain ATCC BAA-1098 / SB2B) protein is Glycerol-3-phosphate dehydrogenase [NAD(P)+].